The chain runs to 154 residues: Cysteine-rich DPF motif domain-containing protein 1 (154 aa).

The protein belongs to the CDPF1 family.

In Drosophila melanogaster (Fruit fly), this protein is Cysteine-rich DPF motif domain-containing protein 1.